A 155-amino-acid chain; its full sequence is Putative ATP synthase protein YMF19-like protein (155 aa).

Helical transmembrane passes span 23–43 (FLWLCLFYITFYFVLYSVLVF), 89–109 (WRALILAYLTSIYFFPILGSF), and 117–137 (VDFGYIPTVCILLYVIFLFFF).

It belongs to the ATPase protein YMF19 family.

The protein localises to the mitochondrion membrane. The protein is Putative ATP synthase protein YMF19-like protein (YMF18) of Marchantia polymorpha (Common liverwort).